The sequence spans 111 residues: MICOS complex subunit MIC13 (111 aa).

A helical transmembrane segment spans residues 8–26 (VVKFATKVTIAGGALYVAY).

It belongs to the MICOS complex subunit Mic13 family. As to quaternary structure, component of the mitochondrial contact site and cristae organizing system (MICOS) complex.

It is found in the mitochondrion inner membrane. Its function is as follows. Component of the MICOS complex, a large protein complex of the mitochondrial inner membrane that plays crucial roles in the maintenance of crista junctions, inner membrane architecture, and formation of contact sites to the outer membrane. Constituent of mature MICOS complex, it is required for the formation of cristae junction (CJ) and maintenance of cristae morphology. Required for the incorporation of MIC10 into the MICOS complex. The sequence is that of MICOS complex subunit MIC13 from Danio rerio (Zebrafish).